A 320-amino-acid chain; its full sequence is MENRNTFSWVKEQITRSISVSIMIYVITRTSISNAYPIFAQQGYENPREATGRIVCANCHLASKPVDIEVPQAVLPDTVFEAVLRIPYDMQLKQVLANGKKGGLNVGAVLILPEGFELAPPDRISPELKEKIGNLAFQSYRPDKKNILVIGPVPGKKYSEIVFPILSPDPATKKDAHFLKYPIYVGGNRGRGQIYPDGSKSNNTVYNATSTGIVRKILRKEKGGYEISIVDASDGRQVIDIIPPGPELLVSEGESIKLDQPLTSNPNVGGFGQGDAEIVLQDPLRVQGLLFFFASVILAQVFLVLKKKQFEKVQLYEMNF.

Positions 1 to 35 (MENRNTFSWVKEQITRSISVSIMIYVITRTSISNA) are cleaved as a signal peptide. Residues Tyr36, Cys56, Cys59, and His60 each contribute to the heme site. The chain crosses the membrane as a helical span at residues 286–305 (VQGLLFFFASVILAQVFLVL).

This sequence belongs to the cytochrome f family. As to quaternary structure, the 4 large subunits of the cytochrome b6-f complex are cytochrome b6, subunit IV (17 kDa polypeptide, petD), cytochrome f and the Rieske protein, while the 4 small subunits are PetG, PetL, PetM and PetN. The complex functions as a dimer. Requires heme as cofactor.

The protein localises to the plastid. It is found in the chloroplast thylakoid membrane. In terms of biological role, component of the cytochrome b6-f complex, which mediates electron transfer between photosystem II (PSII) and photosystem I (PSI), cyclic electron flow around PSI, and state transitions. This chain is Cytochrome f (petA), found in Triticum aestivum (Wheat).